The primary structure comprises 213 residues: Redox-sensing transcriptional repressor Rex (213 aa).

A DNA-binding region (H-T-H motif) is located at residues 18–57 (LYYRIFKRFHAEKIERANSKQIAEAIGIDSATVRRDFSYF). 92–97 (GIGNMG) contacts NAD(+).

It belongs to the transcriptional regulatory Rex family. Homodimer.

It is found in the cytoplasm. In terms of biological role, modulates transcription in response to changes in cellular NADH/NAD(+) redox state. Binds to the promoter of the aldehyde-alcohol dehydrogenase adhE gene. Functions as a redox-dependent repressor of adhE expression. The protein is Redox-sensing transcriptional repressor Rex of Streptococcus pneumoniae (strain ATCC BAA-255 / R6).